Here is a 421-residue protein sequence, read N- to C-terminus: Histidine--tRNA ligase (421 aa).

The protein belongs to the class-II aminoacyl-tRNA synthetase family. Homodimer.

The protein resides in the cytoplasm. It catalyses the reaction tRNA(His) + L-histidine + ATP = L-histidyl-tRNA(His) + AMP + diphosphate + H(+). This Francisella tularensis subsp. holarctica (strain FTNF002-00 / FTA) protein is Histidine--tRNA ligase.